We begin with the raw amino-acid sequence, 600 residues long: ATP-dependent ubiquitin transferase-like protein Cap2 (600 aa).

The tract at residues 1–158 is E2-like domain; the sequence is MSTVVQQVPA…QEKLATTGDA (158 aa). C109 acts as the For E2-like domain in catalysis. Residues 159-373 are linker domain; the sequence is VELPAFPDQS…DQLRTRGEAA (215 aa). The segment at 375 to 600 is adenylation plus E1-like domain; it reads DIRSKKVLII…GTVEKEPHEY (226 aa). The For E1-like domain role is filled by C548.

It in the C-terminal section; belongs to the HesA/MoeB/ThiF family. In terms of assembly, crystallizes as a Cap2 homodimer bound on each side by a CdnD monomer.

Its function is as follows. CD-NTase priming component of a CBASS antiviral system. CBASS (cyclic oligonucleotide-based antiphage signaling system) provides immunity against bacteriophages. The CD-NTase protein (CdnD) synthesizes cyclic nucleotides in response to infection; these serve as specific second messenger signals. The signals activate a diverse range of effectors, leading to bacterial cell death and thus abortive phage infection. A type II-C(AAG) CBASS system. Primes CdnD; acts as a protein transferase, conjugating CdnD, the CD-NTase, to unidentified target(s) in the cell via an E1-E2 ubiquitin transferase-like mechanism. Upon phage infection CdnD activates and makes cyclic nucleotides. During the conjugation reaction CdnD is transiently attached to AMP. Protein conjugation requires ATP. Functionally, protects E.coli against phage T2 infection. When the cdnD-cap2-cap3-cap4 operon is introduced in E.coli there is a more than 10(3) decrease in the efficiency of T2 plaque formation. The operon does not protect against phage T5 and only about 10-fold against T7. The chain is ATP-dependent ubiquitin transferase-like protein Cap2 from Enterobacter hormaechei subsp. hoffmannii (strain UCI 50).